Consider the following 202-residue polypeptide: Small ribosomal subunit protein uS4c (202 aa).

Residues 90 to 148 (MRLDNVIFRLGMSSTIPGARQLVNHRHIMINDEMVDTPGYNCKPRDIITLKNISESRSG) form the S4 RNA-binding domain.

The protein belongs to the universal ribosomal protein uS4 family. As to quaternary structure, part of the 30S ribosomal subunit. Contacts protein S5. The interaction surface between S4 and S5 is involved in control of translational fidelity.

It is found in the plastid. The protein resides in the chloroplast. One of the primary rRNA binding proteins, it binds directly to 16S rRNA where it nucleates assembly of the body of the 30S subunit. Its function is as follows. With S5 and S12 plays an important role in translational accuracy. In Haplomitrium hookeri (Hooker's flapwort), this protein is Small ribosomal subunit protein uS4c (rps4).